The chain runs to 475 residues: UDP-N-acetylmuramate--L-alanine ligase (475 aa).

G125–S131 is a binding site for ATP.

This sequence belongs to the MurCDEF family.

Its subcellular location is the cytoplasm. It carries out the reaction UDP-N-acetyl-alpha-D-muramate + L-alanine + ATP = UDP-N-acetyl-alpha-D-muramoyl-L-alanine + ADP + phosphate + H(+). Its pathway is cell wall biogenesis; peptidoglycan biosynthesis. Cell wall formation. The polypeptide is UDP-N-acetylmuramate--L-alanine ligase (Mycolicibacterium gilvum (strain PYR-GCK) (Mycobacterium gilvum (strain PYR-GCK))).